The sequence spans 305 residues: tRNA dimethylallyltransferase (305 aa).

9–16 (GPTASGKT) serves as a coordination point for ATP. 11-16 (TASGKT) contributes to the substrate binding site. 3 interaction with substrate tRNA regions span residues 34–37 (DSAL), 158–162 (QRLSR), and 239–244 (RCVGYR).

It belongs to the IPP transferase family. As to quaternary structure, monomer. It depends on Mg(2+) as a cofactor.

The catalysed reaction is adenosine(37) in tRNA + dimethylallyl diphosphate = N(6)-dimethylallyladenosine(37) in tRNA + diphosphate. Functionally, catalyzes the transfer of a dimethylallyl group onto the adenine at position 37 in tRNAs that read codons beginning with uridine, leading to the formation of N6-(dimethylallyl)adenosine (i(6)A). The protein is tRNA dimethylallyltransferase of Aeromonas hydrophila subsp. hydrophila (strain ATCC 7966 / DSM 30187 / BCRC 13018 / CCUG 14551 / JCM 1027 / KCTC 2358 / NCIMB 9240 / NCTC 8049).